Consider the following 138-residue polypeptide: Phosphoribosyl-AMP cyclohydrolase (138 aa).

Residues 1 to 23 (MSEQSAPSPTPAAELSSDPASPL) form a disordered region. Asp100 is a binding site for Mg(2+). Cys101 contacts Zn(2+). Residues Asp102 and Asp104 each contribute to the Mg(2+) site. Cys117 and Cys124 together coordinate Zn(2+).

It belongs to the PRA-CH family. As to quaternary structure, homodimer. It depends on Mg(2+) as a cofactor. Requires Zn(2+) as cofactor.

It is found in the cytoplasm. It carries out the reaction 1-(5-phospho-beta-D-ribosyl)-5'-AMP + H2O = 1-(5-phospho-beta-D-ribosyl)-5-[(5-phospho-beta-D-ribosylamino)methylideneamino]imidazole-4-carboxamide. It functions in the pathway amino-acid biosynthesis; L-histidine biosynthesis; L-histidine from 5-phospho-alpha-D-ribose 1-diphosphate: step 3/9. Its function is as follows. Catalyzes the hydrolysis of the adenine ring of phosphoribosyl-AMP. This Paenarthrobacter aurescens (strain TC1) protein is Phosphoribosyl-AMP cyclohydrolase.